The chain runs to 542 residues: Phenylalanine--tRNA ligase beta subunit (542 aa).

Residues leucine 269–proline 344 form the B5 domain. Positions 322, 328, 331, and 332 each coordinate Mg(2+).

This sequence belongs to the phenylalanyl-tRNA synthetase beta subunit family. Type 2 subfamily. As to quaternary structure, tetramer of two alpha and two beta subunits. Mg(2+) serves as cofactor.

It is found in the cytoplasm. It carries out the reaction tRNA(Phe) + L-phenylalanine + ATP = L-phenylalanyl-tRNA(Phe) + AMP + diphosphate + H(+). This Sulfolobus acidocaldarius (strain ATCC 33909 / DSM 639 / JCM 8929 / NBRC 15157 / NCIMB 11770) protein is Phenylalanine--tRNA ligase beta subunit.